A 101-amino-acid polypeptide reads, in one-letter code: Ubiquitin-related modifier 1 (101 aa).

The residue at position 101 (Gly101) is a 1-thioglycine. Gly101 is covalently cross-linked (Glycyl lysine isopeptide (Gly-Lys) (interchain with K-? in acceptor proteins)).

It belongs to the URM1 family. Post-translationally, C-terminal thiocarboxylation occurs in 2 steps, it is first acyl-adenylated (-COAMP) via the hesA/moeB/thiF part of the MOCS3 homolog, then thiocarboxylated (-COSH) via the rhodanese domain of the MOCS3 homolog.

The protein localises to the cytoplasm. The protein operates within tRNA modification; 5-methoxycarbonylmethyl-2-thiouridine-tRNA biosynthesis. Functionally, acts as a sulfur carrier required for 2-thiolation of mcm(5)S(2)U at tRNA wobble positions of cytosolic tRNA(Lys), tRNA(Glu) and tRNA(Gln). Serves as sulfur donor in tRNA 2-thiolation reaction by being thiocarboxylated (-COSH) at its C-terminus by MOCS3. The sulfur is then transferred to tRNA to form 2-thiolation of mcm(5)S(2)U. Also acts as a ubiquitin-like protein (UBL) that is covalently conjugated via an isopeptide bond to lysine residues of target proteins. The thiocarboxylated form serves as substrate for conjugation and oxidative stress specifically induces the formation of UBL-protein conjugates. This chain is Ubiquitin-related modifier 1, found in Gallus gallus (Chicken).